The following is a 488-amino-acid chain: Ribulose bisphosphate carboxylase large chain (488 aa).

Positions 128 and 178 each coordinate substrate. K180 serves as the catalytic Proton acceptor. Position 182 (K182) interacts with substrate. Mg(2+)-binding residues include K206, D208, and E209. K206 bears the N6-carboxylysine mark. Catalysis depends on H298, which acts as the Proton acceptor. The substrate site is built by R299, H331, and S383.

Belongs to the RuBisCO large chain family. Type I subfamily. As to quaternary structure, heterohexadecamer of 8 large chains and 8 small chains. The cofactor is Mg(2+).

It catalyses the reaction 2 (2R)-3-phosphoglycerate + 2 H(+) = D-ribulose 1,5-bisphosphate + CO2 + H2O. The catalysed reaction is D-ribulose 1,5-bisphosphate + O2 = 2-phosphoglycolate + (2R)-3-phosphoglycerate + 2 H(+). In terms of biological role, ruBisCO catalyzes two reactions: the carboxylation of D-ribulose 1,5-bisphosphate, the primary event in carbon dioxide fixation, as well as the oxidative fragmentation of the pentose substrate. Both reactions occur simultaneously and in competition at the same active site. This Xanthobacter flavus protein is Ribulose bisphosphate carboxylase large chain.